Reading from the N-terminus, the 377-residue chain is Nitric oxide reductase FlRd-NAD(+) reductase (377 aa).

This sequence belongs to the FAD-dependent oxidoreductase family. Requires FAD as cofactor.

Its subcellular location is the cytoplasm. The catalysed reaction is 2 reduced [nitric oxide reductase rubredoxin domain] + NAD(+) + H(+) = 2 oxidized [nitric oxide reductase rubredoxin domain] + NADH. It functions in the pathway nitrogen metabolism; nitric oxide reduction. Functionally, one of at least two accessory proteins for anaerobic nitric oxide (NO) reductase. Reduces the rubredoxin moiety of NO reductase. The polypeptide is Nitric oxide reductase FlRd-NAD(+) reductase (Enterobacter sp. (strain 638)).